Here is a 287-residue protein sequence, read N- to C-terminus: Complement C1q-like protein 2 (287 aa).

The signal sequence occupies residues 1 to 21 (MALGLLIAVPLLLQAAPPGAA). The interval 65–144 (LSANPPPPFI…GTGGGGDTEG (80 aa)) is disordered. One can recognise a Collagen-like domain in the interval 76 to 118 (GPKGDPGRPGKPGPRGPPGEPGPPGPRGPPGEKGDSGRPGLPG). A compositionally biased stretch (pro residues) spans 84 to 104 (PGKPGPRGPPGEPGPPGPRGP). Over residues 127–141 (GGVGVVSGGTGGGGD) the composition is skewed to gly residues. The region spanning 154-287 (FSGPKIAFYV…TFSGFLLYPD (134 aa)) is the C1q domain.

Forms homotrimers which can further assemble to form higher-order oligomeric complexes. Interacts with ADGRB3. May interact with ERFE. Forms heterooligomers with C1QL3 and C1QL4, when proteins are coexpressed; this interaction does not occur after secretion. Glycosylated, but not with N-linked glycans. As to expression, highest expression in eye, followed by placenta and brain, intermediate expression in adipose tissue and lowest expression in lymph node and testis.

It is found in the secreted. Functionally, may regulate the number of excitatory synapses that are formed on hippocampus neurons. Has no effect on inhibitory synapses. In Mus musculus (Mouse), this protein is Complement C1q-like protein 2 (C1ql2).